The following is a 132-amino-acid chain: Small ribosomal subunit protein uS9 (132 aa).

It belongs to the universal ribosomal protein uS9 family.

The chain is Small ribosomal subunit protein uS9 from Mesomycoplasma hyopneumoniae (strain 232) (Mycoplasma hyopneumoniae).